Reading from the N-terminus, the 165-residue chain is MNLYLTLFSFCFLAIMAEAASEIPEKFFGKYDLDRSENFDEFLAAKGVSWFVRQMIKLAKVSKVLAKNETPGKYNMENLTSKKNTLYHGWELGKTFEAEGLDGVAHKITFSFKDGVLSEHHIRLNDPEHSAETYYYTIENDQLVMKMVNNGITCRRWFKRSTGKK.

An N-terminal signal peptide occupies residues 1–19 (MNLYLTLFSFCFLAIMAEA).

It belongs to the calycin superfamily. Fatty-acid binding protein (FABP) family. In terms of tissue distribution, expressed in presumptive hypodermal cells by the comma stage and in posterior body wall muscle cells by the two-fold stage. From L1 to adult stages, expression continues in body wall muscle cells adjacent to the pseudocoelom, while hypodermal expression is extinguished.

It localises to the secreted. May play a role in sequestering potentially toxic fatty acids and their peroxidation products, or it may be involved in the maintenance of the impermeable lipid layer of the eggshell. The chain is Fatty acid-binding protein homolog 3 (lbp-3) from Caenorhabditis elegans.